We begin with the raw amino-acid sequence, 223 residues long: Endonuclease V (223 aa).

Aspartate 44 and aspartate 109 together coordinate Mg(2+).

Belongs to the endonuclease V family. The cofactor is Mg(2+).

The protein localises to the cytoplasm. It carries out the reaction Endonucleolytic cleavage at apurinic or apyrimidinic sites to products with a 5'-phosphate.. Its function is as follows. DNA repair enzyme involved in the repair of deaminated bases. Selectively cleaves double-stranded DNA at the second phosphodiester bond 3' to a deoxyinosine leaving behind the intact lesion on the nicked DNA. This Methanothrix thermoacetophila (strain DSM 6194 / JCM 14653 / NBRC 101360 / PT) (Methanosaeta thermophila) protein is Endonuclease V.